Consider the following 218-residue polypeptide: Uracil-DNA glycosylase (218 aa).

Asp-59 serves as the catalytic Proton acceptor.

Belongs to the uracil-DNA glycosylase (UDG) superfamily. UNG family.

It localises to the cytoplasm. It carries out the reaction Hydrolyzes single-stranded DNA or mismatched double-stranded DNA and polynucleotides, releasing free uracil.. Excises uracil residues from the DNA which can arise as a result of misincorporation of dUMP residues by DNA polymerase or due to deamination of cytosine. In Staphylococcus aureus (strain MSSA476), this protein is Uracil-DNA glycosylase.